A 46-amino-acid chain; its full sequence is Viscotoxin-A2 (46 aa).

3 cysteine pairs are disulfide-bonded: Cys-3–Cys-40, Cys-4–Cys-32, and Cys-16–Cys-26.

It belongs to the plant thionin (TC 1.C.44) family.

Its subcellular location is the secreted. Its function is as follows. Thionins are small plant proteins which are toxic to animal cells. They seem to exert their toxic effect at the level of the cell membrane. Their precise function is not known. The chain is Viscotoxin-A2 (THI2.3) from Viscum album (European mistletoe).